A 266-amino-acid polypeptide reads, in one-letter code: Ribonuclease 3 (266 aa).

The tract at residues 1-35 (MMDESADIKPVPTSEDVAAPSGTEPVAPAPKKKRA) is disordered. The RNase III domain maps to 43–171 (MAAIEQRLGH…VIGAVYLDGG (129 aa)). E84 lines the Mg(2+) pocket. Residue D88 is part of the active site. Mg(2+) is bound by residues D157 and E160. E160 is a catalytic residue. Residues 196–265 (DPKTVLQEWA…ASAMIVREGV (70 aa)) form the DRBM domain.

This sequence belongs to the ribonuclease III family. Homodimer. Requires Mg(2+) as cofactor.

The protein localises to the cytoplasm. It catalyses the reaction Endonucleolytic cleavage to 5'-phosphomonoester.. Its function is as follows. Digests double-stranded RNA. Involved in the processing of primary rRNA transcript to yield the immediate precursors to the large and small rRNAs (23S and 16S). Processes some mRNAs, and tRNAs when they are encoded in the rRNA operon. Processes pre-crRNA and tracrRNA of type II CRISPR loci if present in the organism. This is Ribonuclease 3 from Nitrobacter winogradskyi (strain ATCC 25391 / DSM 10237 / CIP 104748 / NCIMB 11846 / Nb-255).